Reading from the N-terminus, the 82-residue chain is MTDKIRTLQGRVISDKMDKSITVAIERKVKHPIYGKIIKRTTKLHVHDENNECKAGDLVEIRECRPLSKTKSWTLVAVVEKA.

This sequence belongs to the universal ribosomal protein uS17 family. In terms of assembly, part of the 30S ribosomal subunit.

Its function is as follows. One of the primary rRNA binding proteins, it binds specifically to the 5'-end of 16S ribosomal RNA. This is Small ribosomal subunit protein uS17 from Aeromonas hydrophila subsp. hydrophila (strain ATCC 7966 / DSM 30187 / BCRC 13018 / CCUG 14551 / JCM 1027 / KCTC 2358 / NCIMB 9240 / NCTC 8049).